Reading from the N-terminus, the 544-residue chain is Zinc finger and SCAN domain-containing protein 25 (544 aa).

Residues lysine 3 and lysine 22 each participate in a glycyl lysine isopeptide (Lys-Gly) (interchain with G-Cter in SUMO2) cross-link. Residues 42 to 124 (RLRFRQFRYQ…AMVEDLTERA (83 aa)) form the SCAN box domain. A Glycyl lysine isopeptide (Lys-Gly) (interchain with G-Cter in SUMO2) cross-link involves residue lysine 128. Residues 157 to 189 (VEVKPEWGMPPGEGVQGPDPGTEEQLSQDPGDE) are disordered. Residues lysine 278 and lysine 285 each participate in a glycyl lysine isopeptide (Lys-Gly) (interchain with G-Cter in SUMO2) cross-link. C2H2-type zinc fingers lie at residues 348-370 (FQCP…QRTH), 375-397 (YGCV…QRTH), 403-425 (YVCS…QRSH), 431-453 (YKCG…RRTH), 459-480 (YTCE…RRAH), and 486-508 (YGCQ…QRIH). The segment at 514–536 (YHCPACGRSFNQRSILNRHQKTQ) adopts a C2H2-type 7; degenerate zinc-finger fold.

The protein belongs to the krueppel C2H2-type zinc-finger protein family.

It localises to the nucleus. In terms of biological role, may be involved in transcriptional regulation. This Homo sapiens (Human) protein is Zinc finger and SCAN domain-containing protein 25 (ZSCAN25).